Consider the following 263-residue polypeptide: tRNA (guanine-N(7)-)-methyltransferase (263 aa).

A disordered region spans residues 1–39; the sequence is MVHHGQMHAQPGVGLRPDTPVASGQLPSTSIRSRRSGIS. S-adenosyl-L-methionine-binding residues include Glu-82, Asp-107, Asn-136, and Asp-159. Asp-159 is a catalytic residue. Residues Lys-163, Asp-195, and 232 to 235 contribute to the substrate site; that span reads TKYE.

It belongs to the class I-like SAM-binding methyltransferase superfamily. TrmB family.

The catalysed reaction is guanosine(46) in tRNA + S-adenosyl-L-methionine = N(7)-methylguanosine(46) in tRNA + S-adenosyl-L-homocysteine. It participates in tRNA modification; N(7)-methylguanine-tRNA biosynthesis. Its function is as follows. Catalyzes the formation of N(7)-methylguanine at position 46 (m7G46) in tRNA. In Mycobacterium bovis (strain ATCC BAA-935 / AF2122/97), this protein is tRNA (guanine-N(7)-)-methyltransferase.